The primary structure comprises 242 residues: MAHVCSVILVRRSFDIHHEQQKISLHNESILLLDKNLADDFAFCSLDTRRLDIEELTVCHYLQNIRQLPRNLGLHSKDRLLINQSPPIQLVTAIFDSFNDPRVNSPILSKMLYLSCLSMFSHKKELIPLLFNSISTVSGKVERLISFDIAKRWYLRDIAERMYTSESLIKKKLQDENTCFSKILLASRMSMARRLLELRQIPLHTIAEKCGYSSTSYFINTFRQYYGVTPHQFSQHSPGTFS.

The HTH araC/xylS-type domain occupies 139-236; sequence GKVERLISFD…GVTPHQFSQH (98 aa). DNA-binding regions (H-T-H motif) lie at residues 156–177 and 203–226; these read RDIAERMYTSESLIKKKLQDEN and LHTIAEKCGYSSTSYFINTFRQYY.

In terms of assembly, homodimer.

Its function is as follows. Depending on the conditions (growth phase and medium), acts as a positive or negative regulator of gadA and gadBC. Repression occurs directly or via the repression of the expression of gadX. Activation occurs directly by the binding of GadW to the gadA and gadBC promoters. In Escherichia coli O6:H1 (strain CFT073 / ATCC 700928 / UPEC), this protein is HTH-type transcriptional regulator GadW (gadW).